Consider the following 360-residue polypeptide: Serine/threonine-protein kinase SRK2H (360 aa).

The region spanning 4–260 (YEVVKDLGAG…LKEIKKHPWY (257 aa)) is the Protein kinase domain. Residues 10–18 (LGAGNFGVA) and lysine 33 contribute to the ATP site. Aspartate 123 acts as the Proton acceptor in catalysis. The segment at 298–360 (EARNPAPSSN…AHSCQEPPKA (63 aa)) is disordered. Residues 313–343 (DDDEEDVEDEVEEEEEEEEEEEEEEEEEEDE) are compositionally biased toward acidic residues. A compositionally biased stretch (basic and acidic residues) spans 344-360 (YEKHVKEAHSCQEPPKA).

It belongs to the protein kinase superfamily. Ser/Thr protein kinase family. Expressed in seedlings.

It catalyses the reaction L-seryl-[protein] + ATP = O-phospho-L-seryl-[protein] + ADP + H(+). It carries out the reaction L-threonyl-[protein] + ATP = O-phospho-L-threonyl-[protein] + ADP + H(+). The sequence is that of Serine/threonine-protein kinase SRK2H (SRK2H) from Arabidopsis thaliana (Mouse-ear cress).